Consider the following 141-residue polypeptide: Nucleoside diphosphate kinase (141 aa).

Residues Lys11, Phe59, Arg87, Thr93, Arg104, and Asn114 each contribute to the ATP site. Residue His117 is the Pros-phosphohistidine intermediate of the active site.

Belongs to the NDK family. In terms of assembly, homotetramer. The cofactor is Mg(2+).

It is found in the cytoplasm. It carries out the reaction a 2'-deoxyribonucleoside 5'-diphosphate + ATP = a 2'-deoxyribonucleoside 5'-triphosphate + ADP. The enzyme catalyses a ribonucleoside 5'-diphosphate + ATP = a ribonucleoside 5'-triphosphate + ADP. Major role in the synthesis of nucleoside triphosphates other than ATP. The ATP gamma phosphate is transferred to the NDP beta phosphate via a ping-pong mechanism, using a phosphorylated active-site intermediate. This chain is Nucleoside diphosphate kinase, found in Burkholderia ambifaria (strain MC40-6).